Consider the following 127-residue polypeptide: MLPTRHRMTKSSEFRQTVKRGVRTTHADLVIHLRRGCPDSACEQVEGPKVGLIVGKSVGGAVVRHRVSRRLRHAAAELLPKLEPVDRMVIRALPSSSTALSASLRQQLRDGIDRSARRQEPAAERQR.

The tract at residues 99–127 (ALSASLRQQLRDGIDRSARRQEPAAERQR) is disordered. Positions 107–127 (QLRDGIDRSARRQEPAAERQR) are enriched in basic and acidic residues.

The protein belongs to the RnpA family. In terms of assembly, consists of a catalytic RNA component (M1 or rnpB) and a protein subunit.

The enzyme catalyses Endonucleolytic cleavage of RNA, removing 5'-extranucleotides from tRNA precursor.. Its function is as follows. RNaseP catalyzes the removal of the 5'-leader sequence from pre-tRNA to produce the mature 5'-terminus. It can also cleave other RNA substrates such as 4.5S RNA. The protein component plays an auxiliary but essential role in vivo by binding to the 5'-leader sequence and broadening the substrate specificity of the ribozyme. The sequence is that of Ribonuclease P protein component from Mycobacteroides abscessus (strain ATCC 19977 / DSM 44196 / CCUG 20993 / CIP 104536 / JCM 13569 / NCTC 13031 / TMC 1543 / L948) (Mycobacterium abscessus).